A 549-amino-acid chain; its full sequence is DNA mismatch repair protein MutL (549 aa).

It belongs to the DNA mismatch repair MutL/HexB family.

This protein is involved in the repair of mismatches in DNA. It is required for dam-dependent methyl-directed DNA mismatch repair. May act as a 'molecular matchmaker', a protein that promotes the formation of a stable complex between two or more DNA-binding proteins in an ATP-dependent manner without itself being part of a final effector complex. The polypeptide is DNA mismatch repair protein MutL (Pseudothermotoga lettingae (strain ATCC BAA-301 / DSM 14385 / NBRC 107922 / TMO) (Thermotoga lettingae)).